Reading from the N-terminus, the 77-residue chain is Acyl carrier protein (77 aa).

The Carrier domain occupies 2–77 (SDIEQRVKNV…LAIDYVKSHQ (76 aa)). Residue S37 is modified to O-(pantetheine 4'-phosphoryl)serine.

The protein belongs to the acyl carrier protein (ACP) family. 4'-phosphopantetheine is transferred from CoA to a specific serine of apo-ACP by AcpS. This modification is essential for activity because fatty acids are bound in thioester linkage to the sulfhydryl of the prosthetic group.

Its subcellular location is the cytoplasm. Its pathway is lipid metabolism; fatty acid biosynthesis. Its function is as follows. Carrier of the growing fatty acid chain in fatty acid biosynthesis. This is Acyl carrier protein from Leucothrix mucor.